The primary structure comprises 412 residues: Serine hydroxymethyltransferase (412 aa).

Residues L117 and 121 to 123 (GHL) each bind (6S)-5,6,7,8-tetrahydrofolate. Position 226 is an N6-(pyridoxal phosphate)lysine (K226).

This sequence belongs to the SHMT family. Homodimer. The cofactor is pyridoxal 5'-phosphate.

It is found in the cytoplasm. It catalyses the reaction (6R)-5,10-methylene-5,6,7,8-tetrahydrofolate + glycine + H2O = (6S)-5,6,7,8-tetrahydrofolate + L-serine. It functions in the pathway one-carbon metabolism; tetrahydrofolate interconversion. The protein operates within amino-acid biosynthesis; glycine biosynthesis; glycine from L-serine: step 1/1. Its function is as follows. Catalyzes the reversible interconversion of serine and glycine with tetrahydrofolate (THF) serving as the one-carbon carrier. This reaction serves as the major source of one-carbon groups required for the biosynthesis of purines, thymidylate, methionine, and other important biomolecules. Also exhibits THF-independent aldolase activity toward beta-hydroxyamino acids, producing glycine and aldehydes, via a retro-aldol mechanism. This is Serine hydroxymethyltransferase from Symbiobacterium thermophilum (strain DSM 24528 / JCM 14929 / IAM 14863 / T).